Consider the following 225-residue polypeptide: PKHD-type hydroxylase YbiX (225 aa).

The region spanning 78-177 is the Fe2OG dioxygenase domain; sequence TLSTPLFNRY…RVASFMWIQS (100 aa). Residues histidine 96, aspartate 98, and histidine 158 each coordinate Fe cation. Arginine 168 lines the 2-oxoglutarate pocket.

Fe(2+) is required as a cofactor. L-ascorbate serves as cofactor.

The chain is PKHD-type hydroxylase YbiX from Escherichia coli O81 (strain ED1a).